Reading from the N-terminus, the 311-residue chain is JNK1/MAPK8-associated membrane protein (311 aa).

The Lumenal portion of the chain corresponds to 1-57 (MAVDIQPACLGLYCGKTLLFKNGSTEIYGECGVCPRGQRTNAQKYCQPCTESPELYD). An N-linked (GlcNAc...) asparagine glycan is attached at Asn22. A helical transmembrane segment spans residues 58–78 (WLYLGFMAMLPLVLHWFFIEW). Over 79–87 (YSGKKSSSA) the chain is Cytoplasmic. Residues 88–108 (LFQHITALFECSMAAIITLLV) form a helical membrane-spanning segment. The Lumenal portion of the chain corresponds to 109–149 (SDPVGVLYIRSCRVLMLSDWYTMLYNPSPDYVTTVHCTHEA). Residues 150–170 (VYPLYTIVFIYYAFCLVLMML) traverse the membrane as a helical segment. The Cytoplasmic portion of the chain corresponds to 171–188 (LRPLLVKKIACGLGKSDR). A helical membrane pass occupies residues 189 to 209 (FKSIYAALYFFPILTVLQAVG). Position 210 (Gly210) is a topological domain, lumenal. A helical membrane pass occupies residues 211-231 (GLLYYAFPYIILVLSLVTLAV). At 232–250 (YMSASEIENCYDLLVRKKR) the chain is on the cytoplasmic side. A helical transmembrane segment spans residues 251–271 (LIVLFSHWLLHAYGIISISRV). The Lumenal segment spans residues 272–277 (DKLEQD). Residues 278–298 (LPLLALVPTPALFYLFTAKFT) form a helical membrane-spanning segment. Over 299–311 (EPSRILSEGANGH) the chain is Cytoplasmic.

Interacts with RNF5 and MAPK8, but not with MAPK9. Binding to MAPK8 occurs before and after exposure to stress, such as UV irradiation. After exposure to stress, interacts with phosphorylated MAPK8. Competes with DUSP10 for MAPK8 binding. Associates with multiple components of the proteasome and with ERAD regulatory proteins including AMFR/GP78, CANX, PSMC1, PSMC2, PSMC3/TBP1, PSMC5, PSMC6, PSMD8, SEC61-ALPHA and UFD1. Interacts with DERL1 (in the presence of misfolded protein CFTR(F508del)). In terms of processing, ubiquitinated by RNF5 via 'Lys-63'-linked ubiquitin linkage in a UBE2N-dependent manner. Ubiquitination decreases association with components of the proteasome and ERAD.

Its subcellular location is the endoplasmic reticulum membrane. In terms of biological role, regulates the duration of MAPK8 activity in response to various stress stimuli. Facilitates degradation of misfolded endoplasmic reticulum (ER) proteins through the recruitment of components of the proteasome and endoplasmic reticulum-associated degradation (ERAD) system. The chain is JNK1/MAPK8-associated membrane protein (JKAMP) from Homo sapiens (Human).